A 304-amino-acid chain; its full sequence is Hairy/enhancer-of-split related with YRPW motif protein 1 (304 aa).

A disordered region spans residues Met-1–Arg-52. The segment covering Glu-28–Ile-47 has biased composition (polar residues). The interval Leu-48–Ala-117 is transcriptional repression and interaction with NCOR1 and SIN3A. Positions Ala-49–Leu-104 constitute a bHLH domain. The region spanning Tyr-122–Leu-158 is the Orange domain. A compositionally biased stretch (polar residues) spans Ser-197–Thr-211. Positions Ser-197–Ser-234 are disordered. Residues Tyr-294–Trp-297 carry the YRPW motif motif.

Belongs to the HEY family. Self-associates. Interacts with HES1 and HEYL. Interacts with HDAC1, NCOR1 and SIN3A. Interacts with GATA4 and GATA6. Interacts with CCDC89/BOIP.

The protein resides in the nucleus. Transcriptional repressor which binds preferentially to the canonical E box sequence 5'-CACGTG-3'. Downstream effector of Notch signaling required for cardiovascular development. Specifically required for the Notch-induced endocardial epithelial to mesenchymal transition, which is itself criticial for cardiac valve and septum development. May be required in conjunction with HEY2 to specify arterial cell fate or identity. Promotes maintenance of neuronal precursor cells and glial versus neuronal fate specification. Represses transcription by the cardiac transcriptional activators GATA4 and GATA6 and by the neuronal bHLH factors ASCL1/MASH1 and NEUROD4/MATH3. This chain is Hairy/enhancer-of-split related with YRPW motif protein 1 (HEY1), found in Bos taurus (Bovine).